Here is a 301-residue protein sequence, read N- to C-terminus: Galectin-6 (301 aa).

Galectin domains are found at residues 19-149 (YKRP…INFF) and 173-301 (YVGA…YVHI).

The sequence is that of Galectin-6 (Lgals6) from Mus musculus (Mouse).